The chain runs to 266 residues: MATKILSLLALLALFASATNASIIPQCSLAPSSIIPQFLPPVTSMAFEHPAVQAYRLQQAIAASVLQQPIAQLQQQSLAHLTIQTIATQQQQQFLPALSHLAMVNPIAYLQQQLLASNPLGLANVVANQQQQQLQQFLPALSQLAMVNPAAYLQQQQLLSSSPLAVANAPTYLQQELLQQIVPALTQLAVANPVAYLQQLLPFNQLTMSNSVAYLQQRQQLLNPLAVANPLVAAFLQQQQLLPYNRFSLMNPVLSRQQPIVGGAIF.

The first 21 residues, 1–21 (MATKILSLLALLALFASATNA), serve as a signal peptide directing secretion.

It belongs to the zein family.

Its function is as follows. Zeins are major seed storage proteins. The chain is 22 kDa alpha-zein 14 from Zea mays (Maize).